The following is a 365-amino-acid chain: GTPase Obg (365 aa).

One can recognise an Obg domain in the interval 1 to 159; it reads MKFIDEARIE…RMLKLELKVL (159 aa). The OBG-type G domain maps to 160–334; that stretch reads ADVGLLGMPN…LIYAIKDHLQ (175 aa). Residues 166 to 173, 191 to 195, 213 to 216, 284 to 287, and 315 to 317 contribute to the GTP site; these read GMPNAGKS, FTTLH, DIPG, NKLD, and SAL. Mg(2+)-binding residues include Ser-173 and Thr-193.

Belongs to the TRAFAC class OBG-HflX-like GTPase superfamily. OBG GTPase family. In terms of assembly, monomer. The cofactor is Mg(2+).

The protein localises to the cytoplasm. Its function is as follows. An essential GTPase which binds GTP, GDP and possibly (p)ppGpp with moderate affinity, with high nucleotide exchange rates and a fairly low GTP hydrolysis rate. Plays a role in control of the cell cycle, stress response, ribosome biogenesis and in those bacteria that undergo differentiation, in morphogenesis control. This chain is GTPase Obg, found in Cupriavidus necator (strain ATCC 17699 / DSM 428 / KCTC 22496 / NCIMB 10442 / H16 / Stanier 337) (Ralstonia eutropha).